A 544-amino-acid chain; its full sequence is ATP-dependent RNA helicase HAS1 (544 aa).

Residues M1 to T10 are compositionally biased toward low complexity. The disordered stretch occupies residues M1–P59. A compositionally biased stretch (basic and acidic residues) spans N18–P29. Residues A31–D50 show a composition bias toward polar residues. Positions V66–A94 match the Q motif motif. The Helicase ATP-binding domain occupies I97–Y273. A110–T117 is a binding site for ATP. The short motif at D220–D223 is the DEAD box element. Residues M287–I456 form the Helicase C-terminal domain. Residues Q299–K315 carry the Bipartite nuclear localization signal motif. Positions G513–K544 are disordered.

Belongs to the DEAD box helicase family. DDX18/HAS1 subfamily. In terms of assembly, associates in the nucleolus with the 60S and pre-60S ribosomal subunits.

It is found in the nucleus. The protein localises to the nucleolus. The catalysed reaction is ATP + H2O = ADP + phosphate + H(+). ATP-dependent RNA helicase involved in 40S ribosomal subunit biogenesis. Required for the processing and cleavage of 35S pre-rRNA at sites A0, A1, and A2, leading to mature 18S rRNA. This chain is ATP-dependent RNA helicase HAS1 (HAS1), found in Cryptococcus neoformans var. neoformans serotype D (strain JEC21 / ATCC MYA-565) (Filobasidiella neoformans).